A 267-amino-acid polypeptide reads, in one-letter code: MSYFEAFILALIQGLTEFLPISSSAHLILPSAIFGWADQGLAFDVAVHVGTLMAVVIYFRHEVITLFRALFASIFKGDRSKEAKLAWMIVIATIPACVFGLLMKDVIEVYLRSAYVIATTTIVFGLLLWWVDKNAKLVADEYQTGWKKAVFIGIAQALAMIPGTSRSGATITAALYLGFTREAAARFSFLMSIPIITLAGSYLGMKLVTSGEPVHVGFLLTGILTSFISAYICIHFFLKMISRMGMTPFVIYRLILGVGLFAFLLSA.

The next 8 helical transmembrane spans lie at 1-21 (MSYFEAFILALIQGLTEFLPI), 39-59 (QGLAFDVAVHVGTLMAVVIYF), 83-103 (AKLAWMIVIATIPACVFGLLM), 111-131 (LRSAYVIATTTIVFGLLLWWV), 144-164 (TGWKKAVFIGIAQALAMIPGT), 189-209 (FLMSIPIITLAGSYLGMKLVT), 218-238 (FLLTGILTSFISAYICIHFFL), and 245-265 (GMTPFVIYRLILGVGLFAFLL).

It belongs to the UppP family.

It is found in the cell inner membrane. It catalyses the reaction di-trans,octa-cis-undecaprenyl diphosphate + H2O = di-trans,octa-cis-undecaprenyl phosphate + phosphate + H(+). Its function is as follows. Catalyzes the dephosphorylation of undecaprenyl diphosphate (UPP). Confers resistance to bacitracin. This chain is Undecaprenyl-diphosphatase, found in Vibrio parahaemolyticus serotype O3:K6 (strain RIMD 2210633).